The chain runs to 1218 residues: Chitin synthase 4 (1218 aa).

2 disordered regions span residues 1–93 (MAEP…PERN) and 132–190 (TVSS…RRQK). A compositionally biased stretch (basic and acidic residues) spans 14–34 (TRDKSHSPYRESPSRRLRDVE). Asn50 is a glycosylation site (N-linked (GlcNAc...) asparagine). Polar residues-rich tracts occupy residues 71–80 (SNPNPMSQSD) and 133–142 (VSSGSTQQDT). Over residues 175 to 190 (RKDTRNLTEEEKRRQK) the composition is skewed to basic and acidic residues. Residue Asn180 is glycosylated (N-linked (GlcNAc...) asparagine). Transmembrane regions (helical) follow at residues 200-220 (IWNI…LQCF) and 235-255 (VGLI…TFGF). Asn365, Asn404, and Asn426 each carry an N-linked (GlcNAc...) asparagine glycan. The helical transmembrane segment at 487 to 507 (VVLYVSLVFILAIVAAKFFLA) threads the bilayer. Disordered regions lie at residues 548-570 (PKIT…RGSM) and 582-606 (YAVD…AKLL). Positions 553–562 (PASTVTGSDG) are enriched in polar residues. Asn617, Asn903, and Asn1030 each carry an N-linked (GlcNAc...) asparagine glycan. 3 consecutive transmembrane segments (helical) span residues 1062-1082 (IGTL…IISI), 1087-1107 (VPVI…ILIV), and 1115-1135 (YILW…VLPA). Positions 1188–1218 (QANGSVWNQQPPTRPPSGYGSMHGFEPYRDY) are disordered. Positions 1189–1198 (ANGSVWNQQP) are enriched in polar residues. Asn1190 carries N-linked (GlcNAc...) asparagine glycosylation.

It belongs to the chitin synthase family. Class IV subfamily. Maximal activity requires trypsin activation, suggesting a zymogenic nature.

The protein resides in the cell membrane. It carries out the reaction [(1-&gt;4)-N-acetyl-beta-D-glucosaminyl](n) + UDP-N-acetyl-alpha-D-glucosamine = [(1-&gt;4)-N-acetyl-beta-D-glucosaminyl](n+1) + UDP + H(+). Activity is stimulated by Mg(2+), and is more inhibited by polyoxin D than by nikkomycin. Polymerizes chitin, a structural polymer of the cell wall and septum, by transferring the sugar moiety of UDP-GlcNAc to the non-reducing end of the growing chitin polymer. CHS4 synthesizes a large amount of chitin and appears to play a role in the process of cell separation. CHS4 is particularly well suited for functioning at the higher temperatures associated with its poorly characterized saprophic environment and with human infection. This Exophiala dermatitidis (strain ATCC 34100 / CBS 525.76 / NIH/UT8656) (Black yeast) protein is Chitin synthase 4.